The primary structure comprises 375 residues: Protein RIC-3 (375 aa).

Positions 1 to 29 (MALSAVQKVVLFSCLVLCVSLLLPRAYIA) are cleaved as a signal peptide. Residues 30-90 (RGKPAAQEGN…GGGGGTRPSL (61 aa)) are Lumenal-facing. The segment covering 38–47 (GNTGLFQSSG) has biased composition (polar residues). The tract at residues 38–63 (GNTGLFQSSGHHPKPTDGRPGGAHFP) is disordered. Residues 91–111 (VGQIIPIYGFGILLYILYILF) form a helical membrane-spanning segment. Topologically, residues 112–375 (KLSSKGKSTK…RKRNTKGIEY (264 aa)) are cytoplasmic. A coiled-coil region spans residues 135-165 (KRKITDYELSQLQDKLKETEEAMEKIISRLG). The disordered stretch occupies residues 251 to 375 (SAEQVAEQMG…RKRNTKGIEY (125 aa)). Polar residues predominate over residues 286-296 (GDQQAQGTISA). Residues 305–319 (EDIEEDEDEDEDPEV) are compositionally biased toward acidic residues. A compositionally biased stretch (basic residues) spans 365–375 (LRKRNTKGIEY).

It belongs to the ric-3 family.

It is found in the endoplasmic reticulum membrane. Molecular chaperone which facilitates proper subunit assembly andsurface trafficking of alpha-7 (CHRNA7) and alpha-8 (CHRNA8) nicotinic acetylcholine receptors. May also promote functional expression of homomeric serotoninergic 5-HT3 receptors, and of heteromeric acetylcholine receptors. The sequence is that of Protein RIC-3 (ric3) from Xenopus tropicalis (Western clawed frog).